The chain runs to 3259 residues: Golgin subfamily B member 1 (3259 aa).

Position 1 is an N-acetylmethionine (methionine 1). Over methionine 1–arginine 3235 the chain is Cytoplasmic. Residues serine 6, serine 17, serine 138, and serine 528 each carry the phosphoserine modification. The stretch at glutamate 48–leucine 593 forms a coiled coil. Positions glycine 119 to glutamate 142 are disordered. Basic and acidic residues predominate over residues glutamine 131–glutamate 142. The interval leucine 624–isoleucine 652 is disordered. Residues valine 635–glutamate 650 show a composition bias toward basic and acidic residues. Serine 653 bears the Phosphoserine mark. 3 coiled-coil regions span residues aspartate 677–proline 1028, leucine 1062–aspartate 1245, and glycine 1301–histidine 1779. Residues alanine 944–tyrosine 963 form a disordered region. Positions serine 1747–isoleucine 1763 are enriched in basic and acidic residues. Residues serine 1747–phenylalanine 1829 are disordered. Composition is skewed to polar residues over residues glutamine 1782–proline 1794 and serine 1802–serine 1820. A coiled-coil region spans residues aspartate 1828–glutamate 3185. Serine 2216, serine 2735, serine 2872, and serine 2884 each carry phosphoserine. Positions arginine 2856–valine 2876 are disordered. The segment covering serine 2865–glutamate 2875 has biased composition (polar residues). The disordered stretch occupies residues threonine 2998–glutamine 3021. Phosphoserine is present on serine 3037. The disordered stretch occupies residues isoleucine 3107–glutamine 3140. Basic and acidic residues predominate over residues asparagine 3118 to glutamate 3131. A helical membrane pass occupies residues valine 3236–threonine 3256. The Lumenal segment spans residues glycine 3257–leucine 3259.

Homodimer; disulfide-linked. Interacts with PLK3.

It is found in the golgi apparatus membrane. Functionally, may participate in forming intercisternal cross-bridges of the Golgi complex. In Homo sapiens (Human), this protein is Golgin subfamily B member 1 (GOLGB1).